The following is a 256-amino-acid chain: UPF0259 membrane protein YPO2199/y2042/YP_1997 (256 aa).

Helical transmembrane passes span 20-40 (IAAI…LNQT), 90-110 (FSAL…IAMV), 118-138 (ALQA…LMFI), 141-161 (LVIQ…AIAL), 192-212 (LIVP…FLIS), and 221-241 (IATI…LVYL).

It belongs to the UPF0259 family.

It is found in the cell inner membrane. This Yersinia pestis protein is UPF0259 membrane protein YPO2199/y2042/YP_1997.